A 314-amino-acid chain; its full sequence is MYTRSKVVGPGLGTSSISRDHAGAGQRRELGLQQNRRQSLEVAAPEGPKMERQGHADQGSAGTYTLIAPNESRRQKIQRIAEQELADLERWKQQNRAKPVYLVPQRLGGSQSEAEVRQKQQLQQMRSKYQQKLKRDESIRIRKEAEEAKFQKMKAIQREKSNKLEEKKQLQEDIRRATFREHHQSKTAELLSRLDTERRNRSACLIAPPATQSSRWKLPVLLRDPSWAGSQAHRDSPQKEDNPRLQKTRDGHQKNKLLETKGQHQEEERAQIHQAEHWRVNNAFLDRLQGKSQPGGLEQSGGCCNMNSTDSWGL.

Disordered stretches follow at residues M1–S72, W227–I272, and Q289–L314. Residues S18–L30 are compositionally biased toward basic and acidic residues. Position 39 is a phosphoserine (S39). A coiled-coil region spans residues E71–R180. The segment covering A232 to I272 has biased composition (basic and acidic residues). Residues N305–L314 show a composition bias toward polar residues.

As to expression, expressed in the spleen, with expression in T cells, B cells, natural killer cells and natural killer T cells and high expression in monocytes and macrophages.

In terms of biological role, plays a role in M1 macrophage polarization and is required for the proper regulation of gene expression during M1 versus M2 macrophage differentiation. Might play a role in RELA/p65 and STAT1 phosphorylation and nuclear localization upon activation of macrophages. The protein is Epithelial-stromal interaction protein 1 (Epsti1) of Mus musculus (Mouse).